A 95-amino-acid chain; its full sequence is Protein TusB (95 aa).

Belongs to the DsrH/TusB family. Heterohexamer, formed by a dimer of trimers. The hexameric TusBCD complex contains 2 copies each of TusB, TusC and TusD. The TusBCD complex interacts with TusE.

Its subcellular location is the cytoplasm. Its function is as follows. Part of a sulfur-relay system required for 2-thiolation of 5-methylaminomethyl-2-thiouridine (mnm(5)s(2)U) at tRNA wobble positions. The sequence is that of Protein TusB from Shigella dysenteriae serotype 1 (strain Sd197).